A 168-amino-acid chain; its full sequence is Transmembrane protein 31 (168 aa).

The span at 1-11 (MRLTEKSEGEQ) shows a compositional bias: basic and acidic residues. The interval 1–63 (MRLTEKSEGE…LPSRRTPTTS (63 aa)) is disordered. Polar residues-rich tracts occupy residues 13–22 (LKPNNSNAPN) and 35–48 (HTPA…ADTQ). The span at 49–63 (PSRCRLPSRRTPTTS) shows a compositional bias: low complexity. 2 helical membrane passes run 119–139 (IGLP…YKFF) and 148–168 (FFIL…LIFF).

The protein localises to the membrane. The protein is Transmembrane protein 31 (TMEM31) of Homo sapiens (Human).